The primary structure comprises 418 residues: Beta-arrestin-1 (418 aa).

The tract at residues methionine 1–serine 163 is interaction with SRC. Residues proline 45–serine 86 are interaction with CHRM2. Tyrosine 47 is modified (phosphotyrosine). 4 residues coordinate 1D-myo-inositol hexakisphosphate: lysine 250, methionine 255, lysine 324, and lysine 326. Residues isoleucine 318–arginine 418 are interaction with TRAF6. The disordered stretch occupies residues histidine 353–asparagine 375. A compositionally biased stretch (basic and acidic residues) spans lysine 355–proline 371. The short motif at aspartate 385–arginine 395 is the [DE]-X(1,2)-F-X-X-[FL]-X-X-X-R motif element. Residues lysine 397 to arginine 418 are disordered. Serine 412 carries the post-translational modification Phosphoserine; by GRK5.

This sequence belongs to the arrestin family. In terms of assembly, monomer. Homodimer. Homooligomer; the self-association is mediated by InsP6-binding. Heterooligomer with ARRB2; the association is mediated by InsP6-binding. Interacts with ADRB2 (phosphorylated). Interacts with CHRM2 (phosphorylated). Interacts with LHCGR. Interacts with CYTH2 and CASR. Interacts with AP2B1 (dephosphorylated at 'Tyr-737'); phosphorylation of AP2B1 at 'Tyr-737' disrupts the interaction. Interacts (dephosphorylated at Ser-412) with CLTC. Interacts with CCR2 and GRK2. Interacts with CRR5. Interacts with PTAFR (phosphorylated on serine residues). Interacts with CLTC and MAP2K3. Interacts with CREB1. Interacts with TRAF6. Interacts with IGF1R and MDM2. Interacts with C5AR1. Interacts with PDE4D. Interacts with SRC (via the SH3 domain and the protein kinase domain); the interaction is independent of the phosphorylation state of SRC C-terminus. Interacts with TACR1. Interacts with RAF1. Interacts with CHUK, IKBKB and MAP3K14. Interacts with DVL1; the interaction is enhanced by phosphorylation of DVL1. Interacts with DVL2; the interaction is enhanced by phosphorylation of DVL2. Interacts with IGF1R. Associates with MAP kinase p38. Part of a MAPK signaling complex consisting of TACR1, ARRB1, SRC, MAPK1 (activated) and MAPK3 (activated). Part of a MAPK signaling complex consisting of F2RL1, ARRB1, RAF1, MAPK1 (activated) and MAPK3 (activated). Interacts with GPR143. Interacts with MAP2K4/MKK4. Interacts with HCK and CXCR1 (phosphorylated). Interacts with ACKR3 and ACKR4. Interacts with ARRDC1; the interaction is direct. Interacts with GPR61, GPR62 and GPR135. In terms of processing, constitutively phosphorylated at Ser-412 in the cytoplasm. At the plasma membrane, is rapidly dephosphorylated, a process that is required for clathrin binding and ADRB2 endocytosis but not for ADRB2 binding and desensitization. Once internalized, is rephosphorylated. The ubiquitination status appears to regulate the formation and trafficking of beta-arrestin-GPCR complexes and signaling. Ubiquitination appears to occur GPCR-specific. Ubiquitinated by MDM2; the ubiquitination is required for rapid internalization of ADRB2. Deubiquitinated by USP33; the deubiquitination leads to a dissociation of the beta-arrestin-GPCR complex. Stimulation of a class A GPCR, such as ADRB2, induces transient ubiquitination and subsequently promotes association with USP33. As to expression, beta-arrestin 1A is found in cortex, cerebellum, striatum, pineal gland, retina and heart. Beta-arrestin 1B is found in spleen, lung, pituitary and kidney.

The protein localises to the cytoplasm. It is found in the nucleus. The protein resides in the cell membrane. It localises to the membrane. Its subcellular location is the clathrin-coated pit. The protein localises to the cell projection. It is found in the pseudopodium. The protein resides in the cytoplasmic vesicle. Its function is as follows. Functions in regulating agonist-mediated G-protein coupled receptor (GPCR) signaling by mediating both receptor desensitization and resensitization processes. During homologous desensitization, beta-arrestins bind to the GPRK-phosphorylated receptor and sterically preclude its coupling to the cognate G-protein; the binding appears to require additional receptor determinants exposed only in the active receptor conformation. The beta-arrestins target many receptors for internalization by acting as endocytic adapters (CLASPs, clathrin-associated sorting proteins) and recruiting the GPRCs to the adapter protein 2 complex 2 (AP-2) in clathrin-coated pits (CCPs). However, the extent of beta-arrestin involvement appears to vary significantly depending on the receptor, agonist and cell type. Internalized arrestin-receptor complexes traffic to intracellular endosomes, where they remain uncoupled from G-proteins. Two different modes of arrestin-mediated internalization occur. Class A receptors, like ADRB2, OPRM1, ENDRA, D1AR and ADRA1B dissociate from beta-arrestin at or near the plasma membrane and undergo rapid recycling. Class B receptors, like AVPR2, AGTR1, NTSR1, TRHR and TACR1 internalize as a complex with arrestin and traffic with it to endosomal vesicles, presumably as desensitized receptors, for extended periods of time. Receptor resensitization then requires that receptor-bound arrestin is removed so that the receptor can be dephosphorylated and returned to the plasma membrane. Involved in internalization of P2RY4 and UTP-stimulated internalization of P2RY2. Involved in phosphorylation-dependent internalization of OPRD1 ands subsequent recycling. Involved in the degradation of cAMP by recruiting cAMP phosphodiesterases to ligand-activated receptors. Beta-arrestins function as multivalent adapter proteins that can switch the GPCR from a G-protein signaling mode that transmits short-lived signals from the plasma membrane via small molecule second messengers and ion channels to a beta-arrestin signaling mode that transmits a distinct set of signals that are initiated as the receptor internalizes and transits the intracellular compartment. Acts as a signaling scaffold for MAPK pathways such as MAPK1/3 (ERK1/2). ERK1/2 activated by the beta-arrestin scaffold is largely excluded from the nucleus and confined to cytoplasmic locations such as endocytic vesicles, also called beta-arrestin signalosomes. Recruits c-Src/SRC to ADRB2 resulting in ERK activation. GPCRs for which the beta-arrestin-mediated signaling relies on both ARRB1 and ARRB2 (codependent regulation) include ADRB2, F2RL1 and PTH1R. For some GPCRs the beta-arrestin-mediated signaling relies on either ARRB1 or ARRB2 and is inhibited by the other respective beta-arrestin form (reciprocal regulation). Inhibits ERK1/2 signaling in AGTR1- and AVPR2-mediated activation (reciprocal regulation). Is required for SP-stimulated endocytosis of NK1R and recruits c-Src/SRC to internalized NK1R resulting in ERK1/2 activation, which is required for the antiapoptotic effects of SP. Is involved in proteinase-activated F2RL1-mediated ERK activity. Acts as a signaling scaffold for the AKT1 pathway. Is involved in alpha-thrombin-stimulated AKT1 signaling. Is involved in IGF1-stimulated AKT1 signaling leading to increased protection from apoptosis. Involved in activation of the p38 MAPK signaling pathway and in actin bundle formation. Involved in F2RL1-mediated cytoskeletal rearrangement and chemotaxis. Involved in AGTR1-mediated stress fiber formation by acting together with GNAQ to activate RHOA. Appears to function as signaling scaffold involved in regulation of MIP-1-beta-stimulated CCR5-dependent chemotaxis. Involved in attenuation of NF-kappa-B-dependent transcription in response to GPCR or cytokine stimulation by interacting with and stabilizing CHUK. May serve as nuclear messenger for GPCRs. Involved in OPRD1-stimulated transcriptional regulation by translocating to CDKN1B and FOS promoter regions and recruiting EP300 resulting in acetylation of histone H4. Involved in regulation of LEF1 transcriptional activity via interaction with DVL1 and/or DVL2 Also involved in regulation of receptors other than GPCRs. Involved in Toll-like receptor and IL-1 receptor signaling through the interaction with TRAF6 which prevents TRAF6 autoubiquitination and oligomerization required for activation of NF-kappa-B and JUN. Involved in IL8-mediated granule release in neutrophils. Binds phosphoinositides. Binds inositol hexakisphosphate (InsP6). Required for atypical chemokine receptor ACKR2-induced RAC1-LIMK1-PAK1-dependent phosphorylation of cofilin (CFL1) and for the up-regulation of ACKR2 from endosomal compartment to cell membrane, increasing its efficiency in chemokine uptake and degradation. Involved in the internalization of the atypical chemokine receptor ACKR3. Negatively regulates the NOTCH signaling pathway by mediating the ubiquitination and degradation of NOTCH1 by ITCH. Participates in the recruitment of the ubiquitin-protein ligase to the receptor. This chain is Beta-arrestin-1 (ARRB1), found in Bos taurus (Bovine).